The sequence spans 251 residues: Octanoyltransferase (251 aa).

The BPL/LPL catalytic domain maps to 56-237 (ADTGDEIWVV…RLIANLDGES (182 aa)). Substrate-binding positions include 96-103 (RGGQITYH), 168-170 (ALG), and 181-183 (GLS). Catalysis depends on C199, which acts as the Acyl-thioester intermediate.

It belongs to the LipB family.

The protein resides in the cytoplasm. It catalyses the reaction octanoyl-[ACP] + L-lysyl-[protein] = N(6)-octanoyl-L-lysyl-[protein] + holo-[ACP] + H(+). It participates in protein modification; protein lipoylation via endogenous pathway; protein N(6)-(lipoyl)lysine from octanoyl-[acyl-carrier-protein]: step 1/2. In terms of biological role, catalyzes the transfer of endogenously produced octanoic acid from octanoyl-acyl-carrier-protein onto the lipoyl domains of lipoate-dependent enzymes. Lipoyl-ACP can also act as a substrate although octanoyl-ACP is likely to be the physiological substrate. The sequence is that of Octanoyltransferase from Burkholderia ambifaria (strain MC40-6).